A 218-amino-acid chain; its full sequence is LexA repressor (218 aa).

The segment at residues 28-48 (RAEIAAEFGFSSPNAAEEHLR) is a DNA-binding region (H-T-H motif). Catalysis depends on for autocatalytic cleavage activity residues Ser136 and Lys173.

The protein belongs to the peptidase S24 family. Homodimer.

The catalysed reaction is Hydrolysis of Ala-|-Gly bond in repressor LexA.. Represses a number of genes involved in the response to DNA damage (SOS response), including recA and lexA. In the presence of single-stranded DNA, RecA interacts with LexA causing an autocatalytic cleavage which disrupts the DNA-binding part of LexA, leading to derepression of the SOS regulon and eventually DNA repair. The polypeptide is LexA repressor (Cupriavidus pinatubonensis (strain JMP 134 / LMG 1197) (Cupriavidus necator (strain JMP 134))).